A 436-amino-acid chain; its full sequence is Magnesium transporter MRS2-4 (436 aa).

The tract at residues 1–56 (MGKGPLSFRRLSSIRHRKKGSAVKDDSAQTSTPSSPPPPLPIHAGGSAVGATGKAK) is disordered. Basic residues predominate over residues 12–21 (SSIRHRKKGS). The segment covering 44 to 53 (AGGSAVGATG) has biased composition (low complexity). 2 helical membrane-spanning segments follow: residues 372 to 392 (LTLTIASFAIAAETLLASLFG) and 405 to 425 (VFGYFVWSVTALCIVLFMVTL). The short motif at 392 to 394 (GMN) is the Required for magnesium transport activity element.

It belongs to the CorA metal ion transporter (MIT) (TC 1.A.35.5) family. As to expression, expressed in the whole plant except roots.

It localises to the membrane. In terms of biological role, magnesium transporter that may mediate the influx of magnesium. This chain is Magnesium transporter MRS2-4 (MRS2-4), found in Arabidopsis thaliana (Mouse-ear cress).